The chain runs to 37 residues: 24 kDa antigen (37 aa).

The sequence is that of 24 kDa antigen from Plasmodium chabaudi.